Reading from the N-terminus, the 368-residue chain is PPE family immunomodulator PPE68 (368 aa).

Disordered stretches follow at residues L255 to A280 and A312 to W368. The segment covering A312–A327 has biased composition (low complexity). Acidic residues predominate over residues R354–W368.

It belongs to the mycobacterial PPE family. Homodimer. Interacts with PE35. PE35/PPE68 complex interacts with human TLR2.

It localises to the secreted. The protein localises to the cell wall. It is found in the cell membrane. The protein resides in the cell surface. Its function is as follows. Plays a major role in RD1-associated pathogenesis, and may contribute to the establishment and maintenance of M.tuberculosis infection. Together with PE35, stimulates the secretion of IL-10 and MCP-1 from human macrophages, via the interaction with human Toll-like receptor 2 (TLR2). This Mycobacterium tuberculosis (strain CDC 1551 / Oshkosh) protein is PPE family immunomodulator PPE68 (PPE68).